A 342-amino-acid chain; its full sequence is Isopentenyl-diphosphate delta-isomerase (342 aa).

A substrate-binding site is contributed by 11–12 (RK). FMN is bound by residues Ser-68, 69–71 (SMT), Ser-99, and Asn-127. Position 99-101 (99-101 (SMR)) interacts with substrate. Residue Gln-162 coordinates substrate. Glu-163 lines the Mg(2+) pocket. FMN-binding positions include Lys-194, Thr-224, 274–276 (GLK), and 295–296 (AG).

It belongs to the IPP isomerase type 2 family. As to quaternary structure, homooctamer. Dimer of tetramers. FMN is required as a cofactor. The cofactor is NADPH. Requires Mg(2+) as cofactor.

The protein resides in the cytoplasm. The enzyme catalyses isopentenyl diphosphate = dimethylallyl diphosphate. Involved in the biosynthesis of isoprenoids. Catalyzes the 1,3-allylic rearrangement of the homoallylic substrate isopentenyl (IPP) to its allylic isomer, dimethylallyl diphosphate (DMAPP). This chain is Isopentenyl-diphosphate delta-isomerase, found in Rickettsia canadensis (strain McKiel).